The chain runs to 647 residues: Probable cobalt/nickel-exporting P-type ATPase (647 aa).

Transmembrane regions (helical) follow at residues 33 to 53 (WAAAALALFLTGLAAQLLGAP), 55 to 75 (AVVWTLYLACYVVGGWEPAWV), 94 to 114 (AAIGAATIGQVFDGALLIVIF), 260 to 280 (AGVVVATLALLTVPLMFGADL), and 291 to 311 (MIVASPCAVVLATMPPLLSAI). Aspartate 339 acts as the 4-aspartylphosphate intermediate in catalysis. Positions 532 and 536 each coordinate Mg(2+). Residues 587–607 (VIANLVMAGAAITTLVLWDLF) traverse the membrane as a helical segment.

The protein belongs to the cation transport ATPase (P-type) (TC 3.A.3) family. Type IB subfamily.

Its subcellular location is the cell membrane. The enzyme catalyses Ni(2+)(out) + ATP + H2O = Ni(2+)(in) + ADP + phosphate + H(+). The catalysed reaction is Co(2+)(out) + ATP + H2O = Co(2+)(in) + ADP + phosphate + H(+). Its function is as follows. Involved in heavy metal homeostasis. Probably exports nickel and cobalt ions out of the cell. The polypeptide is Probable cobalt/nickel-exporting P-type ATPase (ctpD) (Mycolicibacterium smegmatis (strain ATCC 700084 / mc(2)155) (Mycobacterium smegmatis)).